Here is a 257-residue protein sequence, read N- to C-terminus: Thioesterase frbE (257 aa).

This sequence belongs to the AMT4 thioesterase family.

It functions in the pathway antifungal biosynthesis. Its function is as follows. Thioesterase; part of the gene cluster that mediates the biosynthesis of the antifungal antibiotic FR901469, an inhibitor of beta-1,3-glucansynthase, exerting antifungal activity against the pathogenes Candida albicans and Aspergillus fumigatus. FR901469 is a cyclic depsipeptide containing 12 amino acid residues and a fatty acid chain. The NRPS frbI contains 12 modules responsible for the formation of the depsipeptide backbone which is denoted as Acyl-Thr-Ala-Tyr-Val-4OHPro-Thr-Thr-3OHPro-threo3OHGln-Gly-Thr-Orn-OH (C71H116N14O23). The PKS frbB is probably involved in the production of the hydrocarbon chain, and the acyl-CoA ligase frbC might be involved in the transport of the chain to the peptide ptoduct of frbI. Because FR901469 contains 3 hydroxylated amino acid residues, the 3 oxygenases frbA, frbH, and frbJ might be participating in amino acid hydroxylation. As no thioesterase domains were detected in frbI or frbB, the thioesterases frbD and frbE may instead release and cyclize the products of the NRPS and PKS, respectively. This is Thioesterase frbE from Dothideomycetidae sp. (strain 11243) (Fungal sp. (strain No.11243)).